Consider the following 324-residue polypeptide: 26S proteasome regulatory subunit rpn8 (324 aa).

The region spanning 17-151 (VIVHPLVLLS…TNAYFAIDEI (135 aa)) is the MPN domain.

Belongs to the peptidase M67A family.

Acts as a regulatory subunit of the 26S proteasome which is involved in the ATP-dependent degradation of ubiquitinated proteins. The chain is 26S proteasome regulatory subunit rpn8 (rpn8) from Schizosaccharomyces pombe (strain 972 / ATCC 24843) (Fission yeast).